The sequence spans 275 residues: MEMO1 family protein Nmar_0215 (275 aa).

The protein belongs to the MEMO1 family.

The chain is MEMO1 family protein Nmar_0215 from Nitrosopumilus maritimus (strain SCM1).